Here is a 196-residue protein sequence, read N- to C-terminus: Large ribosomal subunit protein bL20 (196 aa).

Belongs to the bacterial ribosomal protein bL20 family.

In terms of biological role, binds directly to 23S ribosomal RNA and is necessary for the in vitro assembly process of the 50S ribosomal subunit. It is not involved in the protein synthesizing functions of that subunit. This is Large ribosomal subunit protein bL20 (rplT) from Oenococcus oeni (strain ATCC BAA-331 / PSU-1).